The primary structure comprises 274 residues: Large ribosomal subunit protein uL2cy (274 aa).

2 disordered regions span residues 1–20 (MAIH…AVDS) and 224–274 (NPVD…RRSK).

It belongs to the universal ribosomal protein uL2 family. In terms of assembly, part of the 50S ribosomal subunit.

It localises to the plastid. It is found in the chloroplast. The protein is Large ribosomal subunit protein uL2cy (rpl2-B) of Populus alba (White poplar).